The chain runs to 188 residues: Ion-translocating oxidoreductase complex subunit B (188 aa).

The hydrophobic stretch occupies residues 1-26; it reads MMSLWIAIGALSTLALVSGVVLGFAA. The 60-residue stretch at 32 to 91 folds into the 4Fe-4S domain; that stretch reads DEDPVVEQVDAILPQSQCGQCGYPGCRPYAEAVSTGGEKINKCAPGGEQVMLKLAELLAV. [4Fe-4S] cluster is bound by residues Cys-49, Cys-52, Cys-57, Cys-74, Cys-117, Cys-120, Cys-123, Cys-127, Cys-147, Cys-150, Cys-153, and Cys-157. 4Fe-4S ferredoxin-type domains are found at residues 108 to 137 and 138 to 167; these read KVAF…GATR and AMHT…MIPV.

This sequence belongs to the 4Fe4S bacterial-type ferredoxin family. RnfB subfamily. In terms of assembly, the complex is composed of six subunits: RnfA, RnfB, RnfC, RnfD, RnfE and RnfG. [4Fe-4S] cluster serves as cofactor.

It localises to the cell inner membrane. In terms of biological role, part of a membrane-bound complex that couples electron transfer with translocation of ions across the membrane. The protein is Ion-translocating oxidoreductase complex subunit B of Yersinia pestis bv. Antiqua (strain Antiqua).